Consider the following 212-residue polypeptide: ATP synthase F(0) complex subunit a (212 aa).

The next 6 helical transmembrane spans lie at 3–23 (MMGI…IYTS), 58–78 (WAAM…LGLL), 87–107 (QLSM…LTGL), 128–148 (IPLL…ALGV), 169–189 (FVLL…LVLL), and 192–212 (LEIA…TLYL).

The protein belongs to the ATPase A chain family. As to quaternary structure, component of the ATP synthase complex composed at least of ATP5F1A/subunit alpha, ATP5F1B/subunit beta, ATP5MC1/subunit c (homooctomer), MT-ATP6/subunit a, MT-ATP8/subunit 8, ATP5ME/subunit e, ATP5MF/subunit f, ATP5MG/subunit g, ATP5MK/subunit k, ATP5MJ/subunit j, ATP5F1C/subunit gamma, ATP5F1D/subunit delta, ATP5F1E/subunit epsilon, ATP5PF/subunit F6, ATP5PB/subunit b, ATP5PD/subunit d, ATP5PO/subunit OSCP. ATP synthase complex consists of a soluble F(1) head domain (subunits alpha(3) and beta(3)) - the catalytic core - and a membrane F(0) domain - the membrane proton channel (subunits c, a, 8, e, f, g, k and j). These two domains are linked by a central stalk (subunits gamma, delta, and epsilon) rotating inside the F1 region and a stationary peripheral stalk (subunits F6, b, d, and OSCP). Interacts with DNAJC30; interaction is direct.

The protein resides in the mitochondrion inner membrane. It carries out the reaction H(+)(in) = H(+)(out). In terms of biological role, subunit a, of the mitochondrial membrane ATP synthase complex (F(1)F(0) ATP synthase or Complex V) that produces ATP from ADP in the presence of a proton gradient across the membrane which is generated by electron transport complexes of the respiratory chain. ATP synthase complex consist of a soluble F(1) head domain - the catalytic core - and a membrane F(1) domain - the membrane proton channel. These two domains are linked by a central stalk rotating inside the F(1) region and a stationary peripheral stalk. During catalysis, ATP synthesis in the catalytic domain of F(1) is coupled via a rotary mechanism of the central stalk subunits to proton translocation. With the subunit c (ATP5MC1), forms the proton-conducting channel in the F(0) domain, that contains two crucial half-channels (inlet and outlet) that facilitate proton movement from the mitochondrial intermembrane space (IMS) into the matrix. Protons are taken up via the inlet half-channel and released through the outlet half-channel, following a Grotthuss mechanism. The chain is ATP synthase F(0) complex subunit a from Tropidurus hispidus (Peters' lava lizard).